A 157-amino-acid chain; its full sequence is UPF0756 membrane protein BH3161 (157 aa).

4 consecutive transmembrane segments (helical) span residues Met1–Asn21, Leu54–Phe74, Trp87–Leu107, and Leu117–Ile137.

The protein belongs to the UPF0756 family.

It is found in the cell membrane. This is UPF0756 membrane protein BH3161 from Halalkalibacterium halodurans (strain ATCC BAA-125 / DSM 18197 / FERM 7344 / JCM 9153 / C-125) (Bacillus halodurans).